Reading from the N-terminus, the 69-residue chain is UPF0150 protein ssr1258 (69 aa).

This sequence belongs to the UPF0150 family.

The protein is UPF0150 protein ssr1258 of Synechocystis sp. (strain ATCC 27184 / PCC 6803 / Kazusa).